Consider the following 195-residue polypeptide: AP-4-A phosphorylase (195 aa).

Over residues 1–17 (MSDEDRTDRATEDHTIF) the composition is skewed to basic and acidic residues. Residues 1-20 (MSDEDRTDRATEDHTIFDRG) form a disordered region. Positions 57-166 (PFTEIPQLSD…VPRWGGDANF (110 aa)) constitute an HIT domain. Residues 151–155 (HLHVH) carry the Histidine triad motif motif. His153 functions as the Tele-AMP-histidine intermediate in the catalytic mechanism.

In terms of assembly, homotetramer. It depends on a divalent metal cation as a cofactor.

The catalysed reaction is ADP + ATP + H(+) = P(1),P(4)-bis(5'-adenosyl) tetraphosphate + phosphate. In terms of biological role, catabolizes diadenosine 5',5'''-P1,P4-tetraphosphate (Ap4A) into ADP and ATP. The sequence is that of AP-4-A phosphorylase from Mycobacterium tuberculosis (strain CDC 1551 / Oshkosh).